We begin with the raw amino-acid sequence, 325 residues long: Beta-ketoacyl-[acyl-carrier-protein] synthase III (325 aa).

Residues Cys-116 and His-252 contribute to the active site. The segment at 253 to 257 (QANLR) is ACP-binding. The active site involves Asn-282.

This sequence belongs to the thiolase-like superfamily. FabH family. As to quaternary structure, homodimer.

The protein resides in the cytoplasm. The catalysed reaction is malonyl-[ACP] + acetyl-CoA + H(+) = 3-oxobutanoyl-[ACP] + CO2 + CoA. It functions in the pathway lipid metabolism; fatty acid biosynthesis. Its function is as follows. Catalyzes the condensation reaction of fatty acid synthesis by the addition to an acyl acceptor of two carbons from malonyl-ACP. Catalyzes the first condensation reaction which initiates fatty acid synthesis and may therefore play a role in governing the total rate of fatty acid production. Possesses both acetoacetyl-ACP synthase and acetyl transacylase activities. Its substrate specificity determines the biosynthesis of branched-chain and/or straight-chain of fatty acids. The polypeptide is Beta-ketoacyl-[acyl-carrier-protein] synthase III (Xanthomonas euvesicatoria pv. vesicatoria (strain 85-10) (Xanthomonas campestris pv. vesicatoria)).